The sequence spans 261 residues: Sugar fermentation stimulation protein homolog (261 aa).

Residues methionine 1–alanine 23 form a disordered region.

It belongs to the SfsA family.

The protein is Sugar fermentation stimulation protein homolog of Syntrophobacter fumaroxidans (strain DSM 10017 / MPOB).